We begin with the raw amino-acid sequence, 434 residues long: MFS-type transporter pynF (434 aa).

Basic and acidic residues predominate over residues 1–13 (MSHDQRSPSEEVS). The disordered stretch occupies residues 1–34 (MSHDQRSPSEEVSRTALSKPASESTIVGDGHHPL). Helical transmembrane passes span 44–64 (WLVVVGGLLIYFPTFGFLNAF), 84–104 (IAWIGSLQIFLLFIGGLVVGP), 109–129 (VGATKLLVPGSVVYVVALMLT), 138–158 (LILAQGILFGCANALLFYPTI), 171–191 (IALGLAVSGSSLGGIFWTEII), 203–223 (TVRACGFISLAFLVPSCVLII), 249–269 (LLFSVGMLLVLWGMFIPFFYL), 280–302 (VTGANNLLAYMNAGSFVGRVLTG), 311–331 (FNVISLAALSCGILLFCLHKI), 334–354 (SGAIIAFSTLYGICSGGLISL), 375–395 (LMMGFCSVGGLTGSPIAGALL), and 402–422 (WYGFIDFCGSILMGGAVVTIL).

Belongs to the major facilitator superfamily. Monocarboxylate porter (TC 2.A.1.13) family.

It is found in the cell membrane. MFS-type transporter; part of the gene cluster that mediates the biosynthesis of pyranonigrins, a family of antioxidative compounds. May be involved in the secretion of pyranonigrins. The polypeptide is MFS-type transporter pynF (Aspergillus niger (strain ATCC MYA-4892 / CBS 513.88 / FGSC A1513)).